Here is a 638-residue protein sequence, read N- to C-terminus: uncharacterized protein (638 aa).

This is an uncharacterized protein from Homo sapiens (Human).